A 188-amino-acid polypeptide reads, in one-letter code: Elongation factor P (188 aa).

The protein belongs to the elongation factor P family.

Its subcellular location is the cytoplasm. It functions in the pathway protein biosynthesis; polypeptide chain elongation. In terms of biological role, involved in peptide bond synthesis. Stimulates efficient translation and peptide-bond synthesis on native or reconstituted 70S ribosomes in vitro. Probably functions indirectly by altering the affinity of the ribosome for aminoacyl-tRNA, thus increasing their reactivity as acceptors for peptidyl transferase. The protein is Elongation factor P of Chlorobium chlorochromatii (strain CaD3).